The following is a 257-amino-acid chain: Large ribosomal subunit protein uL2 (257 aa).

Residues valine 207–asparagine 257 are disordered.

Belongs to the universal ribosomal protein uL2 family. As to quaternary structure, component of the large ribosomal subunit.

It is found in the cytoplasm. In terms of biological role, component of the large ribosomal subunit. The ribosome is a large ribonucleoprotein complex responsible for the synthesis of proteins in the cell. The sequence is that of Large ribosomal subunit protein uL2 (RPL8) from Entamoeba histolytica (strain ATCC 30459 / HM-1:IMSS / ABRM).